Here is a 211-residue protein sequence, read N- to C-terminus: Guanylate kinase (211 aa).

In terms of domain architecture, Guanylate kinase-like spans 7-185 (GLLIVVTGPS…AVAELRAIIM (179 aa)). Position 14–21 (14–21 (GPSAVGKG)) interacts with ATP.

Belongs to the guanylate kinase family.

Its subcellular location is the cytoplasm. It catalyses the reaction GMP + ATP = GDP + ADP. Essential for recycling GMP and indirectly, cGMP. The polypeptide is Guanylate kinase (Symbiobacterium thermophilum (strain DSM 24528 / JCM 14929 / IAM 14863 / T)).